The primary structure comprises 287 residues: Phosphatidylserine decarboxylase proenzyme (287 aa).

Residues Asp90, His147, and Ser252 each act as charge relay system; for autoendoproteolytic cleavage activity in the active site. Ser252 (schiff-base intermediate with substrate; via pyruvic acid; for decarboxylase activity) is an active-site residue. At Ser252 the chain carries Pyruvic acid (Ser); by autocatalysis.

The protein belongs to the phosphatidylserine decarboxylase family. PSD-B subfamily. Prokaryotic type I sub-subfamily. As to quaternary structure, heterodimer of a large membrane-associated beta subunit and a small pyruvoyl-containing alpha subunit. Pyruvate is required as a cofactor. Post-translationally, is synthesized initially as an inactive proenzyme. Formation of the active enzyme involves a self-maturation process in which the active site pyruvoyl group is generated from an internal serine residue via an autocatalytic post-translational modification. Two non-identical subunits are generated from the proenzyme in this reaction, and the pyruvate is formed at the N-terminus of the alpha chain, which is derived from the carboxyl end of the proenzyme. The autoendoproteolytic cleavage occurs by a canonical serine protease mechanism, in which the side chain hydroxyl group of the serine supplies its oxygen atom to form the C-terminus of the beta chain, while the remainder of the serine residue undergoes an oxidative deamination to produce ammonia and the pyruvoyl prosthetic group on the alpha chain. During this reaction, the Ser that is part of the protease active site of the proenzyme becomes the pyruvoyl prosthetic group, which constitutes an essential element of the active site of the mature decarboxylase.

The protein resides in the cell membrane. It carries out the reaction a 1,2-diacyl-sn-glycero-3-phospho-L-serine + H(+) = a 1,2-diacyl-sn-glycero-3-phosphoethanolamine + CO2. It participates in phospholipid metabolism; phosphatidylethanolamine biosynthesis; phosphatidylethanolamine from CDP-diacylglycerol: step 2/2. Its function is as follows. Catalyzes the formation of phosphatidylethanolamine (PtdEtn) from phosphatidylserine (PtdSer). The polypeptide is Phosphatidylserine decarboxylase proenzyme (Pseudomonas putida (strain ATCC 700007 / DSM 6899 / JCM 31910 / BCRC 17059 / LMG 24140 / F1)).